Consider the following 2614-residue polypeptide: Talin-B (2614 aa).

Positions 85 to 369 (RPLKVRLMDE…GYIEILMKKR (285 aa)) constitute an FERM domain. Residues 393 to 421 (RGQTSQATTSSSLSGYDGNGGREGQYSAP) form a disordered region. A compositionally biased stretch (low complexity) spans 395-406 (QTSQATTSSSLS). 2 coiled-coil regions span residues 1938–1965 (TQNI…ASGK) and 2033–2057 (NKAI…LVQS). The 242-residue stretch at 2219–2460 (LLFAAGESLE…SIRKKEYSDQ (242 aa)) folds into the I/LWEQ domain. A disordered region spans residues 2454-2557 (KKEYSDQTGN…AAPTAAAPNK (104 aa)). Residues 2473–2487 (KPTTSISVGITPTKR) show a composition bias toward polar residues. The span at 2517-2537 (KKPAPSQAPSSPVAPVSAPVS) shows a compositional bias: low complexity. The segment covering 2538 to 2548 (KPSPKPAPKPA) has biased composition (pro residues). The HP domain occupies 2553–2614 (AAPNKTYTLE…NNIKTKLGLF (62 aa)).

The protein resides in the cytoplasm. It localises to the cytoskeleton. It is found in the cell cortex. Its function is as follows. Actin-binding protein required for multicellular morphogenesis. Substrate of pkgB and/or pkbA. This is Talin-B (talB) from Dictyostelium discoideum (Social amoeba).